The sequence spans 165 residues: MSNSRPAHARKAEIVAEIVSKIKSAQGVAIAEYKHLTVAKMTELRVQALKQNIDIKVYKDSLVRRAVEELGLVDLIPFLTQQNVFIFSNEDSISAAKLVANFAKKNEALKLKAGIYEGKVVDTAGINEVASLPSKEELYSMFASSLLYPLRKVMAAINAVAETRN.

Belongs to the universal ribosomal protein uL10 family. In terms of assembly, part of the ribosomal stalk of the 50S ribosomal subunit. The N-terminus interacts with L11 and the large rRNA to form the base of the stalk. The C-terminus forms an elongated spine to which L12 dimers bind in a sequential fashion forming a multimeric L10(L12)X complex.

Its function is as follows. Forms part of the ribosomal stalk, playing a central role in the interaction of the ribosome with GTP-bound translation factors. This chain is Large ribosomal subunit protein uL10, found in Mycoplasma capricolum subsp. capricolum (strain California kid / ATCC 27343 / NCTC 10154).